Here is a 391-residue protein sequence, read N- to C-terminus: Pyridinium-3,5-bisthiocarboxylic acid mononucleotide nickel insertion protein (391 aa).

The protein belongs to the LarC family.

The catalysed reaction is Ni(II)-pyridinium-3,5-bisthiocarboxylate mononucleotide = pyridinium-3,5-bisthiocarboxylate mononucleotide + Ni(2+). Its function is as follows. Involved in the biosynthesis of a nickel-pincer cofactor ((SCS)Ni(II) pincer complex). Binds Ni(2+), and functions in nickel delivery to pyridinium-3,5-bisthiocarboxylic acid mononucleotide (P2TMN), to form the mature cofactor. Is thus probably required for the activation of nickel-pincer cofactor-dependent enzymes. This chain is Pyridinium-3,5-bisthiocarboxylic acid mononucleotide nickel insertion protein, found in Staphylococcus saprophyticus subsp. saprophyticus (strain ATCC 15305 / DSM 20229 / NCIMB 8711 / NCTC 7292 / S-41).